The following is a 415-amino-acid chain: D-threonate kinase (415 aa).

Substrate contacts are provided by residues Asp-9, Arg-53, and 81–84 (KIDS). Residues Ser-251, 345–348 (GGET), and Gly-392 each bind ATP.

The protein belongs to the four-carbon acid sugar kinase family.

It carries out the reaction D-threonate + ATP = 4-O-phospho-D-threonate + ADP + H(+). Its function is as follows. Catalyzes the ATP-dependent phosphorylation of D-threonate to D-threonate 4-phosphate. Can also phosphorylate 4-hydroxy-L-threonine, with lower efficiency. This Cupriavidus necator (strain ATCC 17699 / DSM 428 / KCTC 22496 / NCIMB 10442 / H16 / Stanier 337) (Ralstonia eutropha) protein is D-threonate kinase.